A 159-amino-acid polypeptide reads, in one-letter code: 2-C-methyl-D-erythritol 2,4-cyclodiphosphate synthase (159 aa).

A divalent metal cation contacts are provided by D8 and H10. Residues 8–10 (DSH) and 34–35 (HS) each bind 4-CDP-2-C-methyl-D-erythritol 2-phosphate. H42 serves as a coordination point for a divalent metal cation. Residues 56-58 (DIG), 61-65 (FPDSD), F139, and R142 contribute to the 4-CDP-2-C-methyl-D-erythritol 2-phosphate site.

This sequence belongs to the IspF family. Homotrimer. Requires a divalent metal cation as cofactor.

It catalyses the reaction 4-CDP-2-C-methyl-D-erythritol 2-phosphate = 2-C-methyl-D-erythritol 2,4-cyclic diphosphate + CMP. The protein operates within isoprenoid biosynthesis; isopentenyl diphosphate biosynthesis via DXP pathway; isopentenyl diphosphate from 1-deoxy-D-xylulose 5-phosphate: step 4/6. Involved in the biosynthesis of isopentenyl diphosphate (IPP) and dimethylallyl diphosphate (DMAPP), two major building blocks of isoprenoid compounds. Catalyzes the conversion of 4-diphosphocytidyl-2-C-methyl-D-erythritol 2-phosphate (CDP-ME2P) to 2-C-methyl-D-erythritol 2,4-cyclodiphosphate (ME-CPP) with a corresponding release of cytidine 5-monophosphate (CMP). This chain is 2-C-methyl-D-erythritol 2,4-cyclodiphosphate synthase, found in Syntrophus aciditrophicus (strain SB).